The primary structure comprises 111 residues: Cell cycle protein GpsB (111 aa).

Residues 32–63 (LDDIMKDYDAYEAIIKELKGEIARLKAQAANS) adopt a coiled-coil conformation. The segment at 59 to 80 (QAANSPKTTLPTEESNDVLRTE) is disordered. Polar residues predominate over residues 60 to 71 (AANSPKTTLPTE).

This sequence belongs to the GpsB family. As to quaternary structure, forms polymers through the coiled coil domains. Interacts with PBP1, MreC and EzrA.

Its subcellular location is the cytoplasm. Its function is as follows. Divisome component that associates with the complex late in its assembly, after the Z-ring is formed, and is dependent on DivIC and PBP2B for its recruitment to the divisome. Together with EzrA, is a key component of the system that regulates PBP1 localization during cell cycle progression. Its main role could be the removal of PBP1 from the cell pole after pole maturation is completed. Also contributes to the recruitment of PBP1 to the division complex. Not essential for septum formation. This is Cell cycle protein GpsB from Streptococcus suis (strain 98HAH33).